A 271-amino-acid chain; its full sequence is 3-methyl-2-oxobutanoate hydroxymethyltransferase (271 aa).

Positions 53 and 92 each coordinate Mg(2+). Residues 53–54, Asp-92, and Lys-120 each bind 3-methyl-2-oxobutanoate; that span reads DS. Glu-122 is a Mg(2+) binding site. Glu-189 acts as the Proton acceptor in catalysis.

This sequence belongs to the PanB family. As to quaternary structure, homodecamer; pentamer of dimers. Requires Mg(2+) as cofactor.

The protein resides in the cytoplasm. The enzyme catalyses 3-methyl-2-oxobutanoate + (6R)-5,10-methylene-5,6,7,8-tetrahydrofolate + H2O = 2-dehydropantoate + (6S)-5,6,7,8-tetrahydrofolate. Its pathway is cofactor biosynthesis; (R)-pantothenate biosynthesis; (R)-pantoate from 3-methyl-2-oxobutanoate: step 1/2. Catalyzes the reversible reaction in which hydroxymethyl group from 5,10-methylenetetrahydrofolate is transferred onto alpha-ketoisovalerate to form ketopantoate. The polypeptide is 3-methyl-2-oxobutanoate hydroxymethyltransferase (Paraburkholderia phytofirmans (strain DSM 17436 / LMG 22146 / PsJN) (Burkholderia phytofirmans)).